The following is a 344-amino-acid chain: Adenine deaminase (344 aa).

Residues His-24, His-26, and His-204 each contribute to the Zn(2+) site. Glu-207 acts as the Proton donor in catalysis. Asp-285 is a binding site for Zn(2+). Asp-286 lines the substrate pocket.

The protein belongs to the metallo-dependent hydrolases superfamily. Adenosine and AMP deaminases family. Adenine deaminase type 2 subfamily. It depends on Zn(2+) as a cofactor.

It catalyses the reaction adenine + H2O + H(+) = hypoxanthine + NH4(+). In terms of biological role, catalyzes the hydrolytic deamination of adenine to hypoxanthine. Plays an important role in the purine salvage pathway and in nitrogen catabolism. This chain is Adenine deaminase, found in Caulobacter vibrioides (strain ATCC 19089 / CIP 103742 / CB 15) (Caulobacter crescentus).